A 350-amino-acid chain; its full sequence is Serine/arginine-rich splicing factor RS40 (350 aa).

2 RRM domains span residues 2–74 and 97–168; these read KPVF…WTKS and KTLF…YAVK. Composition is skewed to basic and acidic residues over residues 73–82 and 167–187; these read KSERGGDKRS and VKDD…DRSP. Disordered stretches follow at residues 73-94 and 167-350; these read KSER…SSMR and VKDD…PADE. 3 positions are modified to phosphoserine: S193, S195, and S211. Composition is skewed to basic and acidic residues over residues 216–227 and 240–255; these read YRKERTSPDYGR and GSPE…DSPR. Phosphoserine occurs at positions 241, 262, 278, 298, 308, 335, and 340. The span at 272–289 shows a compositional bias: basic and acidic residues; sequence NKRERMSPNHSPFKKESP. Over residues 299–308 the composition is skewed to basic and acidic residues; sequence PIERRERSRS.

Belongs to the splicing factor SR family. RS subfamily. In terms of assembly, component of the spliceosome. Interacts with SNRNP35. Interacts with CYP59. Interacts with RCF3 and CPL1. Interacts with DRB1/HYL1 and SE. In terms of tissue distribution, highly expressed in roots and flowers. A presumably longer alternatively spliced form is found in leaves, stems and flowers.

The protein localises to the nucleus. It is found in the nucleus speckle. Its function is as follows. Required for constitutive and alternative pre-mRNA splicing. Involved in primary miRNA processing and pri-miRNA biogenesis. Binds both intronless and intron-containing pri-miRNAs. The polypeptide is Serine/arginine-rich splicing factor RS40 (RS40) (Arabidopsis thaliana (Mouse-ear cress)).